A 508-amino-acid chain; its full sequence is Photosystem II CP47 reaction center protein (508 aa).

6 helical membrane-spanning segments follow: residues 21–36, 101–115, 140–156, 203–218, 237–252, and 457–472; these read AVHI…WAGS, IVFS…IWHW, GIHL…FGAF, IAAG…FHLS, VLSS…AFVV, and SFAL…HGAR.

It belongs to the PsbB/PsbC family. PsbB subfamily. As to quaternary structure, PSII is composed of 1 copy each of membrane proteins PsbA, PsbB, PsbC, PsbD, PsbE, PsbF, PsbH, PsbI, PsbJ, PsbK, PsbL, PsbM, PsbT, PsbX, PsbY, PsbZ, Psb30/Ycf12, at least 3 peripheral proteins of the oxygen-evolving complex and a large number of cofactors. It forms dimeric complexes. Binds multiple chlorophylls. PSII binds additional chlorophylls, carotenoids and specific lipids. serves as cofactor.

It is found in the plastid. The protein resides in the chloroplast thylakoid membrane. One of the components of the core complex of photosystem II (PSII). It binds chlorophyll and helps catalyze the primary light-induced photochemical processes of PSII. PSII is a light-driven water:plastoquinone oxidoreductase, using light energy to abstract electrons from H(2)O, generating O(2) and a proton gradient subsequently used for ATP formation. The chain is Photosystem II CP47 reaction center protein from Buxus microphylla (Littleleaf boxwood).